The following is a 20-amino-acid chain: Short cationic peptide-4d (20 aa).

Glutamate 20 carries the glutamic acid 1-amide modification.

Expressed by the venom gland.

The protein localises to the secreted. The polypeptide is Short cationic peptide-4d (Cupiennius salei (American wandering spider)).